We begin with the raw amino-acid sequence, 211 residues long: Glycerol-3-phosphate acyltransferase (211 aa).

5 consecutive transmembrane segments (helical) span residues 5 to 25 (ALGMMLIAYLCGSVSSAILFC), 58 to 78 (VLVFDILKGMLPVWGAYALGV), 80 to 100 (PLYLGLTAIAACLGHIYPVFF), 112 to 132 (LGAIAPIGLDLTGLMTGTWLL), and 138 to 158 (GYSSLGAIVSALIAPFYVWWF).

Belongs to the PlsY family. In terms of assembly, probably interacts with PlsX.

It localises to the cell inner membrane. It catalyses the reaction an acyl phosphate + sn-glycerol 3-phosphate = a 1-acyl-sn-glycero-3-phosphate + phosphate. It functions in the pathway lipid metabolism; phospholipid metabolism. In terms of biological role, catalyzes the transfer of an acyl group from acyl-phosphate (acyl-PO(4)) to glycerol-3-phosphate (G3P) to form lysophosphatidic acid (LPA). This enzyme utilizes acyl-phosphate as fatty acyl donor, but not acyl-CoA or acyl-ACP. The sequence is that of Glycerol-3-phosphate acyltransferase from Pectobacterium atrosepticum (strain SCRI 1043 / ATCC BAA-672) (Erwinia carotovora subsp. atroseptica).